A 467-amino-acid polypeptide reads, in one-letter code: Pachytene checkpoint protein 2 homolog (467 aa).

209 to 216 (GPPGTGKT) contributes to the ATP binding site.

This sequence belongs to the AAA ATPase family. PCH2 subfamily.

Its subcellular location is the chromosome. Plays a key role in chromosome recombination during meiosis. Mediates meiotic chromosome remodeling and crossover maturation. The protein is Pachytene checkpoint protein 2 homolog of Arabidopsis thaliana (Mouse-ear cress).